We begin with the raw amino-acid sequence, 495 residues long: Averantin hydroxylase (495 aa).

The chain crosses the membrane as a helical span at residues 12–32 (ILLLIVLTVLTPPSLALYRLW). N-linked (GlcNAc...) asparagine glycosylation is found at Asn258 and Asn289. Cys436 lines the heme pocket.

The protein belongs to the cytochrome P450 family. Heme serves as cofactor.

It is found in the membrane. It carries out the reaction (1'S)-averantin + reduced [NADPH--hemoprotein reductase] + O2 = (1'S,5'R)-5'-hydroxyaverantin + oxidized [NADPH--hemoprotein reductase] + H2O. It catalyses the reaction (1'S)-averantin + reduced [NADPH--hemoprotein reductase] + O2 = (1'S,5'S)-5'-hydroxyaverantin + oxidized [NADPH--hemoprotein reductase] + H2O + H(+). Its pathway is mycotoxin biosynthesis; aflatoxin biosynthesis. In terms of biological role, averantin hydroxylase; part of the gene cluster that mediates the biosynthesis of aflatoxins, a group of polyketide-derived furanocoumarins, and part of the most toxic and carcinogenic compounds among the known mycotoxins. The four major aflatoxins produced by A.parasiticus are aflatoxin B1 (AFB1), aflatoxin B2 (AFB2), aflatoxin G1 (AFG1) and aflatoxin G2 (AFG2). Within the aflatoxin pathway, the cytochrome P450 monooxygenase aflG catalyzes the hydroxylation of AVN to 5'hydroxyaverantin (HAVN). The biosynthesis of aflatoxins begins with the norsolorinic acid synthase aflC that combines a hexanoyl starter unit produced by the fatty acid synthase aflA/aflB and 7 malonyl-CoA extender units to synthesize the precursor NOR. The second step is the conversion of NOR to averantin and requires the norsolorinic acid ketoreductase aflD, which catalyzes the dehydration of norsolorinic acid to form (1'S)-averantin. The norsolorinic acid reductases aflE and aflF may also play a role in the conversion of NOR to AVN. The cytochrome P450 monooxygenase aflG then catalyzes the hydroxylation of AVN to 5'hydroxyaverantin (HAVN). The next step is performed by the 5'-hydroxyaverantin dehydrogenase aflH that transforms HAVN to 5'-oxoaverantin (OAVN) which is further converted to averufin (AVF) by aflK that plays a dual role in the pathway, as a 5'-oxoaverantin cyclase that mediates conversion of 5'-oxoaverantin, as well as a versicolorin B synthase in a later step in the pathway. The averufin oxidase aflI catalyzes the conversion of AVF to versiconal hemiacetal acetate (VHA). VHA is then the substrate for the versiconal hemiacetal acetate esterase aflJ to yield versiconal (VAL). Versicolorin B synthase aflK then converts VAL to versicolorin B (VERB) by closing the bisfuran ring of aflatoxin which is required for DNA-binding, thus giving to aflatoxin its activity as a mutagen. Then, the activity of the versicolorin B desaturase aflL leads to versicolorin A (VERA). A branch point starts from VERB since it can also be converted to dihydrodemethylsterigmatocystin (DMDHST), probably also by aflL, VERA being a precursor for aflatoxins B1 and G1, and DMDHST for aflatoxins B2 and G2. Next, the versicolorin reductase aflM and the cytochrome P450 monooxygenase aflN are involved in conversion of VERA to demethylsterigmatocystin (DMST). AflX and aflY seem also involved in this step, through probable aflX-mediated epoxide ring-opening step following versicolorin A oxidation and aflY-mediated Baeyer-Villiger oxidation required for the formation of the xanthone ring. The methyltransferase aflO then leads to the modification of DMST to sterigmatocystin (ST), and of DMDHST to dihydrosterigmatocystin (DHST). Both ST and DHST are then substrates of the O-methyltransferase aflP to yield O-methylsterigmatocystin (OMST) and dihydro-O-methylsterigmatocystin (DHOMST), respectively. Finally OMST is converted to aflatoxins B1 and G1, and DHOMST to aflatoxins B2 and G2, via the action of several enzymes including O-methylsterigmatocystin oxidoreductase aflQ, the cytochrome P450 monooxygenase aflU, but also the NADH-dependent flavin oxidoreductase nadA which is specifically required for the synthesis of AFG1. The protein is Averantin hydroxylase of Aspergillus parasiticus (strain ATCC 56775 / NRRL 5862 / SRRC 143 / SU-1).